The primary structure comprises 192 residues: BREX protein BrxB (192 aa).

This sequence belongs to the BrxB family.

BREX systems (bacteriophage exclusion) provide immunity against bacteriophage. Part of a type 1 BREX system. This system allows phage adsorption but prevents phage DNA replication, without degradation of the phage DNA. Methylation of bacterial DNA by PglX probably guides self/non-self discrimination. When the brxA-brxB-brxC-pglX and pglZ-brxL operons are transformed into a susceptible B.subtilis strain (BEST7003) they confer resistance to bacteriophages SPbeta, SP16, Zeta, phi3T and SP02 and partial protection to phages SP01 and SP82G (these include lytic and temperate phage). They do not protect against phages phi105, rho10 or rho14. Additionally confers a very slight reduction in efficiency of plasmid transformation. This chain is BREX protein BrxB, found in Bacillus cereus (strain H3081.97).